Consider the following 286-residue polypeptide: GTP cyclohydrolase MptA (286 aa).

The protein belongs to the GTP cyclohydrolase IV family. Homodimer. Fe(2+) is required as a cofactor.

The catalysed reaction is GTP + H2O = 7,8-dihydroneopterin 2',3'-cyclic phosphate + formate + diphosphate + H(+). The protein operates within cofactor biosynthesis; 5,6,7,8-tetrahydromethanopterin biosynthesis. Its function is as follows. Converts GTP to 7,8-dihydro-D-neopterin 2',3'-cyclic phosphate, the first intermediate in the biosynthesis of coenzyme methanopterin. The polypeptide is GTP cyclohydrolase MptA (Thermoplasma acidophilum (strain ATCC 25905 / DSM 1728 / JCM 9062 / NBRC 15155 / AMRC-C165)).